A 114-amino-acid polypeptide reads, in one-letter code: MSIRLLCCVAFSLLWAGPVTAGITQAPTSQILAAGRSMTLRCTQDMRHNAMYWYRQDLGLGLRLIHYSNTAGTTGKGEVPDGYSVSRANTDDFPLTLASAVPSQTSVYFCASSD.

A signal peptide spans 1 to 21 (MSIRLLCCVAFSLLWAGPVTA). In terms of domain architecture, Ig-like spans 22-114 (GITQAPTSQI…TSVYFCASSD (93 aa)). Cysteines 42 and 110 form a disulfide.

As to quaternary structure, alpha-beta TR is a heterodimer composed of an alpha and beta chain; disulfide-linked. The alpha-beta TR is associated with the transmembrane signaling CD3 coreceptor proteins to form the TR-CD3 (TcR or TCR). The assembly of alpha-beta TR heterodimers with CD3 occurs in the endoplasmic reticulum where a single alpha-beta TR heterodimer associates with one CD3D-CD3E heterodimer, one CD3G-CD3E heterodimer and one CD247 homodimer forming a stable octameric structure. CD3D-CD3E and CD3G-CD3E heterodimers preferentially associate with TR alpha and TR beta chains, respectively. The association of the CD247 homodimer is the last step of TcR assembly in the endoplasmic reticulum and is required for transport to the cell surface.

The protein localises to the cell membrane. Functionally, v region of the variable domain of T cell receptor (TR) beta chain that participates in the antigen recognition. Alpha-beta T cell receptors are antigen specific receptors which are essential to the immune response and are present on the cell surface of T lymphocytes. Recognize peptide-major histocompatibility (MH) (pMH) complexes that are displayed by antigen presenting cells (APC), a prerequisite for efficient T cell adaptive immunity against pathogens. Binding of alpha-beta TR to pMH complex initiates TR-CD3 clustering on the cell surface and intracellular activation of LCK that phosphorylates the ITAM motifs of CD3G, CD3D, CD3E and CD247 enabling the recruitment of ZAP70. In turn ZAP70 phosphorylates LAT, which recruits numerous signaling molecules to form the LAT signalosome. The LAT signalosome propagates signal branching to three major signaling pathways, the calcium, the mitogen-activated protein kinase (MAPK) kinase and the nuclear factor NF-kappa-B (NF-kB) pathways, leading to the mobilization of transcription factors that are critical for gene expression and essential for T cell growth and differentiation. The T cell repertoire is generated in the thymus, by V-(D)-J rearrangement. This repertoire is then shaped by intrathymic selection events to generate a peripheral T cell pool of self-MH restricted, non-autoaggressive T cells. Post-thymic interaction of alpha-beta TR with the pMH complexes shapes TR structural and functional avidity. This Homo sapiens (Human) protein is T cell receptor beta variable 6-4.